We begin with the raw amino-acid sequence, 267 residues long: Exopolysaccharide production negative regulator (267 aa).

The signal sequence occupies residues 1–23 (MVTSEFKLFKFMLMGMSIAVALA).

Negatively modulates exopolysaccharide (EPS) biosynthesis. This is Exopolysaccharide production negative regulator (exoR) from Rhizobium leguminosarum bv. viciae.